Consider the following 216-residue polypeptide: Small ribosomal subunit protein uS3 (216 aa).

The region spanning 38-108 is the KH type-2 domain; the sequence is LREFVKKKLH…DLAIDIQEVK (71 aa).

This sequence belongs to the universal ribosomal protein uS3 family. As to quaternary structure, part of the 30S ribosomal subunit. Forms a tight complex with proteins S10 and S14.

In terms of biological role, binds the lower part of the 30S subunit head. Binds mRNA in the 70S ribosome, positioning it for translation. The chain is Small ribosomal subunit protein uS3 from Desulfosudis oleivorans (strain DSM 6200 / JCM 39069 / Hxd3) (Desulfococcus oleovorans).